The chain runs to 258 residues: UPF0246 protein ETA_07010 (258 aa).

The protein belongs to the UPF0246 family.

The chain is UPF0246 protein ETA_07010 from Erwinia tasmaniensis (strain DSM 17950 / CFBP 7177 / CIP 109463 / NCPPB 4357 / Et1/99).